Reading from the N-terminus, the 805-residue chain is MDMITVGQSVKIKRTDGRVHMAVVAVINQSGKCITVEWYERGETKGKEVELDAILTLNPELMQDTVEQHAAPEPKKQATAPMNLSRNPTQSAIGGNLTSRMTMAGNMLNKIQESQSIPNPIVSSNSVNTNSNSNTTAGGGGGTTTSTTTGLQRPRYSQAATGQQQTRIASAVPNNTLPNPSAAASAGPAAQGVATAATTQGAGGASTRRSHALKEVERLKENREKRRARQAEMKEEKVALMNQDPGNPNWETAQMIREYQSTLEFVPLLDGQAVDDHQITVCVRKRPISRKEVNRKEIDVISVPRKDMLIVHEPRSKVDLTKFLENHKFRFDYAFNDTCDNAMVYKYTAKPLVKTIFEGGMATCFAYGQTGSGKTHTMGGEFNGKVQDCKNGIYAMAAKDVFVTLNMPRYRAMNLVVSASFFEIYSGKVFDLLSDKQKLRVLEDGKQQVQVVGLTEKVVDGVEEVLKLIQHGNAARTSGQTSANSNSSRSHAVFQIVLRPQGSTKIHGKFSFIDLAGNERGVDTSSADRQTRMEGAEINKSLLALKECIRALGKQSAHLPFRVSKLTQVLRDSFIGEKSKTCMIAMISPGLSSCEHTLNTLRYADRVKELVVKDIVEVCPGGDTEPIEITDDEEEEELNMVHPHSHQLHPNSHAPASQSNNQRAPASHHSGAVIHNNNNNNNKNGNAGNMDLAMLSSLSEHEMSDELIVQHQAIDDLQQTEEMVVEYHRTVNATLETFLAESKALYNLTNYVDYDQDSYCKRGESMFSQLLDIAIQCRDMMAEYRAKLAKEEMLSCSFNSPNGKR.

A globular region spans residues 1-274 (MDMITVGQSV…FVPLLDGQAV (274 aa)). Disordered regions lie at residues 68-94 (QHAA…SAIG) and 117-211 (IPNP…RRSH). Positions 80–94 (APMNLSRNPTQSAIG) are enriched in polar residues. Low complexity predominate over residues 123–136 (SSNSVNTNSNSNTT). Ser-157 carries the post-translational modification Phosphoserine. Over residues 158–179 (QAATGQQQTRIASAVPNNTLPN) the composition is skewed to polar residues. Over residues 180-200 (PSAAASAGPAAQGVATAATTQ) the composition is skewed to low complexity. Residues 205–244 (ASTRRSHALKEVERLKENREKRRARQAEMKEEKVALMNQD) are a coiled coil. Residues 278 to 610 (QITVCVRKRP…LRYADRVKEL (333 aa)) form the Kinesin motor domain. Residue 368-375 (GQTGSGKT) coordinates ATP. The residue at position 630 (Thr-630) is a Phosphothreonine. The segment at 633 to 688 (EEEEELNMVHPHSHQLHPNSHAPASQSNNQRAPASHHSGAVIHNNNNNNNKNGNAG) is disordered. Positions 648-664 (LHPNSHAPASQSNNQRA) are enriched in polar residues. The span at 676 to 688 (NNNNNNNKNGNAG) shows a compositional bias: low complexity. Phosphoserine occurs at positions 795, 797, and 800.

It belongs to the TRAFAC class myosin-kinesin ATPase superfamily. Kinesin family. MCAK/KIF2 subfamily. Interacts with Alms1a (via C-terminus). In terms of tissue distribution, expressed in male germline stem cells and spermatogonia (at protein level).

The protein localises to the cytoplasm. The protein resides in the cytoskeleton. It localises to the microtubule organizing center. Its subcellular location is the centrosome. It is found in the spindle pole. The protein localises to the chromosome. The protein resides in the centromere. Its function is as follows. Required during anaphase to drive sister chromatid separation to promote flux by actively depolymerizing kinetochore microtubules at their pole-associated minus ends, thereby moving chromatids through a 'poleward flux'. Involved in asymmetric cell division of sensory organ precursor (SOP) cells by playing a role in the asymmetric localization of Sara-expressing endosomes to the pIIa daughter cell but not to the pIIb cell. Klp98A targets Sara-expressing endosomes to the central spindle which is symmetrically arranged in early cell division. During late cytokinesis, central spindle asymmetry is generated by enrichment of Patronin on the pIIb side which protects microtubules from depolymerization by Klp10A while unprotected microtubules on the pIIa side are disassembled by Klp10A, leading to the asymmetric delivery of Sara-expressing endosomes to the pIIa daughter cell. This is Kinesin-like protein Klp10A from Drosophila melanogaster (Fruit fly).